The following is a 111-amino-acid chain: MASSKPPARIVYQEFGPVADPLSEEQIDLPPQQQNVRIQATRSGRKGKTVTVVSGLQLSAMGQQALLKALKSFCGSGGTLKEDCVEIQGDQREKILAYLLKQGYKAKISGG.

The protein belongs to the SUI1 family.

This is an uncharacterized protein from Synechocystis sp. (strain ATCC 27184 / PCC 6803 / Kazusa).